We begin with the raw amino-acid sequence, 271 residues long: Autophagy-related protein 5 (271 aa).

Lysine 145 is covalently cross-linked (Glycyl lysine isopeptide (Lys-Gly) (interchain with G-Cter in ATG12)).

This sequence belongs to the ATG5 family. As to quaternary structure, conjugated with ATG12. Interacts with ATG10. The ATG5-ATG12 conjugate forms a complex with several units of ATG16. The ATG12-ATG5 conjugate also associates with ATG3. Post-translationally, conjugated to ATG12; which is essential for autophagy. Conjugation with ATG12 involves ATG7 as an E1-like activating enzyme and ATG10 as an E2-like conjugating enzyme.

The protein localises to the preautophagosomal structure membrane. In terms of biological role, involved in cytoplasm to vacuole transport (Cvt) and autophagic vesicle formation. Autophagy is essential for maintenance of amino acid levels and protein synthesis under nitrogen starvation. Required for selective autophagic degradation of the nucleus (nucleophagy). Also required for mitophagy, which eliminates defective or superfluous mitochondria in order to fulfill cellular energy requirements and prevent excess ROS production. Conjugation with ATG12, through a ubiquitin-like conjugating system involving ATG7 as an E1-like activating enzyme and ATG10 as an E2-like conjugating enzyme, is essential for its function. The ATG12-ATG5 conjugate acts as an E3-like enzyme which is required for lipidation of ATG8 and ATG8 association to the vesicle membranes. ATG12-ATG5 rearranges the ATG3 catalytic center and enhances its E2 activity. The protein is Autophagy-related protein 5 of Kluyveromyces marxianus (strain DMKU3-1042 / BCC 29191 / NBRC 104275) (Yeast).